The primary structure comprises 201 residues: Ribonuclease HII (201 aa).

Residues 11-201 (LRECGCDEAG…VVDADRPTTE (191 aa)) enclose the RNase H type-2 domain. The a divalent metal cation site is built by Asp-17, Glu-18, and Asp-109.

It belongs to the RNase HII family. The cofactor is Mn(2+). Mg(2+) is required as a cofactor.

Its subcellular location is the cytoplasm. The catalysed reaction is Endonucleolytic cleavage to 5'-phosphomonoester.. Endonuclease that specifically degrades the RNA of RNA-DNA hybrids. This Porphyromonas gingivalis (strain ATCC BAA-308 / W83) protein is Ribonuclease HII (rnhB).